The chain runs to 423 residues: Phthiocerol/phthiodiolone dimycocerosyl transferase (423 aa).

The active-site Proton acceptor is the histidine 125.

Belongs to the acyltransferase PapA5 family. Monomer. Interacts directly with the acyl carrier protein (ACP) domain of the mycocerosic acid synthase (mas) protein.

It catalyses the reaction 2 a mycocerosyl-[mycocerosic acid synthase] + a phthiocerol = a dimycocerosyl phthiocerol + 2 holo-[mycocerosic acid synthase].. It carries out the reaction 2 a mycocerosyl-[mycocerosic acid synthase] + a phthiodiolone = a dimycocerosyl phthiodiolone + 2 holo-[mycocerosic acid synthase].. The catalysed reaction is 2 a mycocerosyl-[mycocerosic acid synthase] + a phenolphthiocerol = a dimycocerosyl phenolphthiocerol + 2 holo-[mycocerosic acid synthase].. Its function is as follows. Catalyzes diesterification of phthiocerol, phthiodiolone, and phenolphthiocerol with mycocerosic acids, the final step in the phthiocerol, phthiodiolone and phenolphthiocerol dimycocerosate esters (PDIM) synthesis. Can directly transfer the mycocerosate bound to the mycocerosic acid synthase (mas) onto the substrate alcohols. The protein is Phthiocerol/phthiodiolone dimycocerosyl transferase (papA5) of Mycobacterium leprae (strain TN).